Here is a 291-residue protein sequence, read N- to C-terminus: ATP synthase gamma chain (291 aa).

It belongs to the ATPase gamma chain family. As to quaternary structure, F-type ATPases have 2 components, CF(1) - the catalytic core - and CF(0) - the membrane proton channel. CF(1) has five subunits: alpha(3), beta(3), gamma(1), delta(1), epsilon(1). CF(0) has three main subunits: a, b and c.

The protein resides in the cell inner membrane. Functionally, produces ATP from ADP in the presence of a proton gradient across the membrane. The gamma chain is believed to be important in regulating ATPase activity and the flow of protons through the CF(0) complex. The sequence is that of ATP synthase gamma chain from Burkholderia lata (strain ATCC 17760 / DSM 23089 / LMG 22485 / NCIMB 9086 / R18194 / 383).